The chain runs to 38 residues: Photosystem II reaction center protein L (38 aa).

A helical membrane pass occupies residues 17–37 (SLYWGLLLIFVLAVLFSNYFF).

The protein belongs to the PsbL family. PSII is composed of 1 copy each of membrane proteins PsbA, PsbB, PsbC, PsbD, PsbE, PsbF, PsbH, PsbI, PsbJ, PsbK, PsbL, PsbM, PsbT, PsbX, PsbY, PsbZ, Psb30/Ycf12, at least 3 peripheral proteins of the oxygen-evolving complex and a large number of cofactors. It forms dimeric complexes.

It is found in the plastid. Its subcellular location is the chloroplast thylakoid membrane. In terms of biological role, one of the components of the core complex of photosystem II (PSII). PSII is a light-driven water:plastoquinone oxidoreductase that uses light energy to abstract electrons from H(2)O, generating O(2) and a proton gradient subsequently used for ATP formation. It consists of a core antenna complex that captures photons, and an electron transfer chain that converts photonic excitation into a charge separation. This subunit is found at the monomer-monomer interface and is required for correct PSII assembly and/or dimerization. This is Photosystem II reaction center protein L from Ananas comosus (Pineapple).